The chain runs to 456 residues: 3-isopropylmalate dehydratase large subunit (456 aa).

[4Fe-4S] cluster is bound by residues Cys336, Cys396, and Cys399.

This sequence belongs to the aconitase/IPM isomerase family. LeuC type 1 subfamily. In terms of assembly, heterodimer of LeuC and LeuD. It depends on [4Fe-4S] cluster as a cofactor.

The enzyme catalyses (2R,3S)-3-isopropylmalate = (2S)-2-isopropylmalate. The protein operates within amino-acid biosynthesis; L-leucine biosynthesis; L-leucine from 3-methyl-2-oxobutanoate: step 2/4. Its function is as follows. Catalyzes the isomerization between 2-isopropylmalate and 3-isopropylmalate, via the formation of 2-isopropylmaleate. This Staphylococcus aureus (strain MW2) protein is 3-isopropylmalate dehydratase large subunit.